Here is a 316-residue protein sequence, read N- to C-terminus: Methionyl-tRNA formyltransferase (316 aa).

(6S)-5,6,7,8-tetrahydrofolate is bound at residue 109-112; the sequence is SLLP.

It belongs to the Fmt family.

The catalysed reaction is L-methionyl-tRNA(fMet) + (6R)-10-formyltetrahydrofolate = N-formyl-L-methionyl-tRNA(fMet) + (6S)-5,6,7,8-tetrahydrofolate + H(+). Its function is as follows. Attaches a formyl group to the free amino group of methionyl-tRNA(fMet). The formyl group appears to play a dual role in the initiator identity of N-formylmethionyl-tRNA by promoting its recognition by IF2 and preventing the misappropriation of this tRNA by the elongation apparatus. This Nitrosomonas eutropha (strain DSM 101675 / C91 / Nm57) protein is Methionyl-tRNA formyltransferase.